The chain runs to 405 residues: L-rhamnonate dehydratase (405 aa).

Positions 33 and 59 each coordinate substrate. 3 residues coordinate Mg(2+): Asp-226, Glu-252, and Glu-280. His-329 functions as the Proton acceptor in the catalytic mechanism. A substrate-binding site is contributed by Glu-349.

The protein belongs to the mandelate racemase/muconate lactonizing enzyme family. RhamD subfamily. In terms of assembly, homooctamer; tetramer of dimers. It depends on Mg(2+) as a cofactor.

It catalyses the reaction L-rhamnonate = 2-dehydro-3-deoxy-L-rhamnonate + H2O. In terms of biological role, catalyzes the dehydration of L-rhamnonate to 2-keto-3-deoxy-L-rhamnonate (KDR). This Escherichia coli O6:K15:H31 (strain 536 / UPEC) protein is L-rhamnonate dehydratase.